We begin with the raw amino-acid sequence, 284 residues long: MDVAKQFSSYLKQENKTENTVQGYTSGIRQYIKWFEGSYDRKLTKLYRQNILEYISYLKNVKMLNAKSINHKISSLAKFNEFLIQKGSQQDQVILKTDMIKVQTVYASPTQIVELDVKKFLQSVLEDNNKRNYAIATLLAYTGVRISEALSIKMNDFNLQTGECIIRSGKGGKQRIVLLNSKVLSAIKDYLIDRKTYSTAHESPYLFISKKREKLDRTVVNRIFKSYSNVITPHQLRHFFCTNAIEKGFSIHEVANQAGHSNIHTTLLYTNPNQLQLKNKMELL.

One can recognise a Core-binding (CB) domain in the interval 1–84 (MDVAKQFSSY…SLAKFNEFLI (84 aa)). The region spanning 107–282 (ASPTQIVELD…NQLQLKNKME (176 aa)) is the Tyr recombinase domain. Residues Arg-145, Lys-170, His-234, Arg-237, and His-260 contribute to the active site. The active-site O-(3'-phospho-DNA)-tyrosine intermediate is the Tyr-269.

Belongs to the 'phage' integrase family.

Functionally, resolvase catalyzes the resolution (a site-specific recombination) of the cointegrated replicon to yield the final transposition products. The chain is TnP I resolvase (tnpI) from Bacillus thuringiensis.